A 1177-amino-acid polypeptide reads, in one-letter code: DNA-directed RNA polymerase subunit beta (1177 aa).

Positions Asp-1147–Asp-1161 are enriched in acidic residues. The tract at residues Asp-1147 to Glu-1177 is disordered. The segment covering His-1162–Glu-1177 has biased composition (basic and acidic residues).

This sequence belongs to the RNA polymerase beta chain family. In terms of assembly, the RNAP catalytic core consists of 2 alpha, 1 beta, 1 beta' and 1 omega subunit. When a sigma factor is associated with the core the holoenzyme is formed, which can initiate transcription.

It carries out the reaction RNA(n) + a ribonucleoside 5'-triphosphate = RNA(n+1) + diphosphate. DNA-dependent RNA polymerase catalyzes the transcription of DNA into RNA using the four ribonucleoside triphosphates as substrates. The sequence is that of DNA-directed RNA polymerase subunit beta from Bacillus cereus (strain G9842).